The following is a 357-amino-acid chain: Cytochrome c peroxidase, mitochondrial (357 aa).

The transit peptide at 1–23 (MSATALRIAPIASRTFQRRLGYL) directs the protein to the mitochondrion. The Proton acceptor role is filled by H116. A disordered region spans residues 189 to 212 (PWRSGRTDLPEDMTPDNGRLPDGD). Position 239 (H239) interacts with heme b. The active-site Tryptophan radical intermediate is the W255.

The protein belongs to the peroxidase family. Cytochrome c peroxidase subfamily. Forms a one-to-one complex with cytochrome c. The cofactor is heme b.

The protein resides in the mitochondrion matrix. Its subcellular location is the mitochondrion intermembrane space. The catalysed reaction is 2 Fe(II)-[cytochrome c] + H2O2 + 2 H(+) = 2 Fe(III)-[cytochrome c] + 2 H2O. Functionally, destroys radicals which are normally produced within the cells and which are toxic to biological systems. The protein is Cytochrome c peroxidase, mitochondrial of Candida glabrata (strain ATCC 2001 / BCRC 20586 / JCM 3761 / NBRC 0622 / NRRL Y-65 / CBS 138) (Yeast).